The chain runs to 177 residues: uncharacterized protein (177 aa).

This is an uncharacterized protein from Acanthamoeba polyphaga (Amoeba).